The sequence spans 289 residues: Acetyl-coenzyme A carboxylase carboxyl transferase subunit beta (289 aa).

Positions 28-289 (VMTKCPKCKK…QGGEMAVWQS (262 aa)) constitute a CoA carboxyltransferase N-terminal domain. Cys32, Cys35, Cys51, and Cys54 together coordinate Zn(2+). The C4-type zinc finger occupies 32-54 (CPKCKKIMYTKELLKNLKVCVNC).

This sequence belongs to the AccD/PCCB family. As to quaternary structure, acetyl-CoA carboxylase is a heterohexamer composed of biotin carboxyl carrier protein (AccB), biotin carboxylase (AccC) and two subunits each of ACCase subunit alpha (AccA) and ACCase subunit beta (AccD). Zn(2+) is required as a cofactor.

Its subcellular location is the cytoplasm. It carries out the reaction N(6)-carboxybiotinyl-L-lysyl-[protein] + acetyl-CoA = N(6)-biotinyl-L-lysyl-[protein] + malonyl-CoA. The protein operates within lipid metabolism; malonyl-CoA biosynthesis; malonyl-CoA from acetyl-CoA: step 1/1. Functionally, component of the acetyl coenzyme A carboxylase (ACC) complex. Biotin carboxylase (BC) catalyzes the carboxylation of biotin on its carrier protein (BCCP) and then the CO(2) group is transferred by the transcarboxylase to acetyl-CoA to form malonyl-CoA. The protein is Acetyl-coenzyme A carboxylase carboxyl transferase subunit beta of Bacillus cereus (strain AH187).